Consider the following 716-residue polypeptide: Protein C-mannosyl-transferase DPY19L3 (716 aa).

The Cytoplasmic portion of the chain corresponds to 1 to 43; that stretch reads MMSIRQRREIRATEVSEDFPAQEENVKLENKLPSGCTSRRLWK. Residues 44–64 form a helical membrane-spanning segment; sequence ILSLTIGGTIALCIGLLTSVY. Residues 65 to 154 are Lumenal-facing; it reads LATLHENDLW…RVLPVQKYLE (90 aa). N-linked (GlcNAc...) asparagine glycosylation is present at Asn118. A helical membrane pass occupies residues 155-182; that stretch reads PVYFYIYTLFGLQAIYVTALYITSWLLS. At 183–184 the chain is on the cytoplasmic side; it reads GT. The name=3 intramembrane region spans 185–197; sequence WLSGLLAAFWYVT. The Cytoplasmic portion of the chain corresponds to 198-215; the sequence is NRIDTTRVEFTIPLRENW. The segment at residues 216-230 is an intramembrane region (name=4); it reads ALPFFAIQIAAITYF. The Cytoplasmic segment spans residues 231–239; sequence LRPNLQPLS. Residues 240–256 traverse the membrane as a helical segment; the sequence is ERLTLLAIFISTFLFSL. The Lumenal portion of the chain corresponds to 257–262; that stretch reads TWQFNQ. The helical transmembrane segment at 263-279 threads the bilayer; that stretch reads FMMLMQALVLFTLDSLD. Over 280-289 the chain is Cytoplasmic; the sequence is MLPAVKATWL. The helical transmembrane segment at 290–306 threads the bilayer; the sequence is YGIQITSLLLVCILQFF. The Lumenal portion of the chain corresponds to 307–308; sequence NS. A helical transmembrane segment spans residues 309–323; sequence MILGSLLISFNLSVF. Residues 324 to 338 lie on the Cytoplasmic side of the membrane; sequence IARKLQKNLKTGSFL. Residues 339-359 traverse the membrane as a helical segment; it reads NRLGKLLLHLFMVLCLTLFLN. Residues 360–414 are Lumenal-facing; the sequence is NIIKKILNLKSDEHIFKFLKAKFGLGATRDFDANLYLCEEAFGLLPFNTFGRLSD. Residues 415–437 traverse the membrane as a helical segment; sequence TLLFYAYIFVLSITVIVAFVVAF. Topologically, residues 438-465 are cytoplasmic; sequence HNLSDSTNQQSVGKMEKGTVDLKPETAY. A helical transmembrane segment spans residues 466–485; it reads NLIHTILFGFLALSTMRMKY. At 486 to 487 the chain is on the lumenal side; that stretch reads LW. Residues 488 to 499 traverse the membrane as a helical segment; it reads TSHMCVFASFGL. Residues 500-522 are Cytoplasmic-facing; it reads CSPEIWELLLKSVHLYNPKRICI. Residues 523–539 form a helical membrane-spanning segment; it reads MRYSVPILILLYLCYKF. The Lumenal portion of the chain corresponds to 540–716; it reads WPGMMDELSE…FHVYKLSRNK (177 aa). Residue Asn704 is glycosylated (N-linked (GlcNAc...) asparagine).

It belongs to the dpy-19 family.

It localises to the endoplasmic reticulum membrane. The enzyme catalyses L-tryptophyl-[protein] + a di-trans,poly-cis-dolichyl beta-D-mannosyl phosphate = C-alpha-D-mannosyl-L-tryptophyl-[protein] + a di-trans,poly-cis-dolichyl phosphate + H(+). It participates in protein modification; protein glycosylation. Its function is as follows. C-mannosyltransferase that mediates C-mannosylation of tryptophan residues on target proteins. The reaction occurs on the luminal side of the endoplasmic reticulum and involves the transfer of a mannose unit from a dolichylphosphate mannose (Dol-P-Man) donor to an acceptor protein containing a WxxW or WxxC consensus sequence. C-mannosylates RSPO1, a Wnt signaling regulator, preferentially at the first Trp residue in the sequence WxxW. C-mannosylates the netrin receptor UNC5A, preferentially at the third tryptophan of WxxWxxWxxC sequence. The sequence is that of Protein C-mannosyl-transferase DPY19L3 (DPY19L3) from Pongo abelii (Sumatran orangutan).